The following is a 180-amino-acid chain: Large ribosomal subunit protein uL5 (180 aa).

It belongs to the universal ribosomal protein uL5 family. As to quaternary structure, part of the 50S ribosomal subunit; part of the 5S rRNA/L5/L18/L25 subcomplex. Contacts the 5S rRNA and the P site tRNA. Forms a bridge to the 30S subunit in the 70S ribosome.

Functionally, this is one of the proteins that bind and probably mediate the attachment of the 5S RNA into the large ribosomal subunit, where it forms part of the central protuberance. In the 70S ribosome it contacts protein S13 of the 30S subunit (bridge B1b), connecting the 2 subunits; this bridge is implicated in subunit movement. Contacts the P site tRNA; the 5S rRNA and some of its associated proteins might help stabilize positioning of ribosome-bound tRNAs. This chain is Large ribosomal subunit protein uL5, found in Anaeromyxobacter dehalogenans (strain 2CP-1 / ATCC BAA-258).